The chain runs to 315 residues: Beta-ketoacyl-[acyl-carrier-protein] synthase III (315 aa).

Catalysis depends on residues Cys-115 and His-244. The tract at residues 245 to 249 is ACP-binding; sequence QANAR. The active site involves Asn-274.

This sequence belongs to the thiolase-like superfamily. FabH family. As to quaternary structure, homodimer.

It localises to the cytoplasm. It carries out the reaction malonyl-[ACP] + acetyl-CoA + H(+) = 3-oxobutanoyl-[ACP] + CO2 + CoA. It functions in the pathway lipid metabolism; fatty acid biosynthesis. Functionally, catalyzes the condensation reaction of fatty acid synthesis by the addition to an acyl acceptor of two carbons from malonyl-ACP. Catalyzes the first condensation reaction which initiates fatty acid synthesis and may therefore play a role in governing the total rate of fatty acid production. Possesses both acetoacetyl-ACP synthase and acetyl transacylase activities. Its substrate specificity determines the biosynthesis of branched-chain and/or straight-chain of fatty acids. This Rubrobacter xylanophilus (strain DSM 9941 / JCM 11954 / NBRC 16129 / PRD-1) protein is Beta-ketoacyl-[acyl-carrier-protein] synthase III.